We begin with the raw amino-acid sequence, 1012 residues long: Retinoblastoma-related protein (1012 aa).

The domain A stretch occupies residues 403–604 (TPVSTAMTTA…EKGSSMDNSL (202 aa)). Residues 403 to 863 (TPVSTAMTTA…NEVFIPSVKP (461 aa)) form a pocket region. Residues 605 to 723 (IIARPALSAG…PGGGGETCAE (119 aa)) form a spacer region. The domain B stretch occupies residues 724–863 (TGINIFFSKI…NEVFIPSVKP (140 aa)). Residues 884–905 (NNDKDGQCPGSPKLSTFPSLPD) are disordered.

Belongs to the retinoblastoma protein (RB) family.

It localises to the nucleus. Regulator of biological processes that recruits a histone deacetylase to control gene transcription. May play a role in the entry into mitosis, negatively regulating the cell proliferation. Formation of stable complexes with geminiviridae replication-associated proteins may create a cellular environment which favors viral DNA replication. The chain is Retinoblastoma-related protein (RB) from Oxybasis rubra (Red goosefoot).